Here is a 224-residue protein sequence, read N- to C-terminus: Large ribosomal subunit protein uL4 (224 aa).

Positions 52-109 (AAARQGTHSTKTRGDVSGGGRKPYRQKGTGRARQGSTRTPQFTGGGVVHGPKPRDYSQ) are disordered.

This sequence belongs to the universal ribosomal protein uL4 family. As to quaternary structure, part of the 50S ribosomal subunit.

One of the primary rRNA binding proteins, this protein initially binds near the 5'-end of the 23S rRNA. It is important during the early stages of 50S assembly. It makes multiple contacts with different domains of the 23S rRNA in the assembled 50S subunit and ribosome. Its function is as follows. Forms part of the polypeptide exit tunnel. The sequence is that of Large ribosomal subunit protein uL4 from Mycobacterium ulcerans (strain Agy99).